The following is a 382-amino-acid chain: MSQSNNVTDLARANIRALTPYMSARRLGGNGDVWLNANEYPLGTEYQLTTQTFNRYPECQPKHVIERYAAYAGLPPEQVLVSRGADEGIELLIRAFCEPGQDAILFCPPTYGMYAVSAETFGVERRTVPAQADWQLDLPAIANNLDQVKVIYVCSPNNPTGNLINPADLQAVLALAQGRAIVAIDEAYIEFCPQASVSNWLKDYPNLVILRTLSKAFALAGLRCGFTLANSDIIQLLLKVIAPYPLSTPVADIAAQALSPKGIEQMRQRVSEVRANRAWLQSALQDCACVEQVFTSESNYLLARFTASSSVFNALWDQGIILRDQNKQPGLANCLRITIGTRQECERVIAALAPLPGIDNSNNIDNQSKTHSQTSSIRKGTI.

Residue Lys-215 is modified to N6-(pyridoxal phosphate)lysine. The segment at 360 to 382 (NSNNIDNQSKTHSQTSSIRKGTI) is disordered.

It belongs to the class-II pyridoxal-phosphate-dependent aminotransferase family. Histidinol-phosphate aminotransferase subfamily. Homodimer. It depends on pyridoxal 5'-phosphate as a cofactor.

The enzyme catalyses L-histidinol phosphate + 2-oxoglutarate = 3-(imidazol-4-yl)-2-oxopropyl phosphate + L-glutamate. The protein operates within amino-acid biosynthesis; L-histidine biosynthesis; L-histidine from 5-phospho-alpha-D-ribose 1-diphosphate: step 7/9. This chain is Histidinol-phosphate aminotransferase, found in Yersinia pseudotuberculosis serotype IB (strain PB1/+).